The primary structure comprises 126 residues: Protein ApaG (126 aa).

The 125-residue stretch at 2–126 (SALDTSIRVE…FRLTTPGLLH (125 aa)) folds into the ApaG domain.

The protein is Protein ApaG of Shewanella baltica (strain OS195).